The following is a 515-amino-acid chain: Maturase K (515 aa).

It belongs to the intron maturase 2 family. MatK subfamily.

The protein localises to the plastid. Its subcellular location is the chloroplast. Functionally, usually encoded in the trnK tRNA gene intron. Probably assists in splicing its own and other chloroplast group II introns. The polypeptide is Maturase K (Pinus densiflora (Japanese red pine)).